The following is an 83-amino-acid chain: Small ribosomal subunit protein bS20 (83 aa).

It belongs to the bacterial ribosomal protein bS20 family.

Binds directly to 16S ribosomal RNA. This chain is Small ribosomal subunit protein bS20, found in Leuconostoc mesenteroides subsp. mesenteroides (strain ATCC 8293 / DSM 20343 / BCRC 11652 / CCM 1803 / JCM 6124 / NCDO 523 / NBRC 100496 / NCIMB 8023 / NCTC 12954 / NRRL B-1118 / 37Y).